Consider the following 1349-residue polypeptide: DNA-directed RNA polymerase subunit beta' (1349 aa).

4 residues coordinate Zn(2+): Cys-219, Cys-293, Cys-300, and Cys-303. The tract at residues 1298–1349 (LDSPTLGESGFGSRRAERSVLDDEDELIADEVVDDDDFEEEEEDDEDDFDDE) is disordered. Acidic residues predominate over residues 1319–1349 (DDEDELIADEVVDDDDFEEEEEDDEDDFDDE).

The protein belongs to the RNA polymerase beta' chain family. RpoC2 subfamily. As to quaternary structure, in cyanobacteria the RNAP catalytic core is composed of 2 alpha, 1 beta, 1 beta', 1 gamma and 1 omega subunit. When a sigma factor is associated with the core the holoenzyme is formed, which can initiate transcription. It depends on Zn(2+) as a cofactor.

It catalyses the reaction RNA(n) + a ribonucleoside 5'-triphosphate = RNA(n+1) + diphosphate. DNA-dependent RNA polymerase catalyzes the transcription of DNA into RNA using the four ribonucleoside triphosphates as substrates. This chain is DNA-directed RNA polymerase subunit beta', found in Nostoc punctiforme (strain ATCC 29133 / PCC 73102).